A 435-amino-acid polypeptide reads, in one-letter code: 3-phosphoshikimate 1-carboxyvinyltransferase (435 aa).

3 residues coordinate 3-phosphoshikimate: lysine 21, serine 22, and arginine 26. A phosphoenolpyruvate-binding site is contributed by lysine 21. Phosphoenolpyruvate is bound by residues glycine 98 and arginine 126. 6 residues coordinate 3-phosphoshikimate: serine 169, serine 170, glutamine 171, serine 197, aspartate 312, and lysine 339. Position 171 (glutamine 171) interacts with phosphoenolpyruvate. Aspartate 312 functions as the Proton acceptor in the catalytic mechanism. 3 residues coordinate phosphoenolpyruvate: arginine 343, arginine 386, and lysine 412.

This sequence belongs to the EPSP synthase family. In terms of assembly, monomer.

It is found in the cytoplasm. It catalyses the reaction 3-phosphoshikimate + phosphoenolpyruvate = 5-O-(1-carboxyvinyl)-3-phosphoshikimate + phosphate. The protein operates within metabolic intermediate biosynthesis; chorismate biosynthesis; chorismate from D-erythrose 4-phosphate and phosphoenolpyruvate: step 6/7. Functionally, catalyzes the transfer of the enolpyruvyl moiety of phosphoenolpyruvate (PEP) to the 5-hydroxyl of shikimate-3-phosphate (S3P) to produce enolpyruvyl shikimate-3-phosphate and inorganic phosphate. This Clostridium beijerinckii (strain ATCC 51743 / NCIMB 8052) (Clostridium acetobutylicum) protein is 3-phosphoshikimate 1-carboxyvinyltransferase.